Here is a 626-residue protein sequence, read N- to C-terminus: UvrABC system protein C (626 aa).

The region spanning 20 to 97 is the GIY-YIG domain; the sequence is ECSGVYKMLD…IKKFQPKFNI (78 aa). The 36-residue stretch at 207 to 242 folds into the UVR domain; sequence RELQENLSKKMQELSSQMRFEEAAEIRDRIKALSYV.

This sequence belongs to the UvrC family. As to quaternary structure, interacts with UvrB in an incision complex.

The protein localises to the cytoplasm. In terms of biological role, the UvrABC repair system catalyzes the recognition and processing of DNA lesions. UvrC both incises the 5' and 3' sides of the lesion. The N-terminal half is responsible for the 3' incision and the C-terminal half is responsible for the 5' incision. This Rickettsia typhi (strain ATCC VR-144 / Wilmington) protein is UvrABC system protein C.